The primary structure comprises 429 residues: Methylenetetrahydrofolate--tRNA-(uracil-5-)-methyltransferase TrmFO (429 aa).

Position 7–12 (7–12 (GAGLAG)) interacts with FAD.

Belongs to the MnmG family. TrmFO subfamily. FAD serves as cofactor.

Its subcellular location is the cytoplasm. It catalyses the reaction uridine(54) in tRNA + (6R)-5,10-methylene-5,6,7,8-tetrahydrofolate + NADH + H(+) = 5-methyluridine(54) in tRNA + (6S)-5,6,7,8-tetrahydrofolate + NAD(+). The catalysed reaction is uridine(54) in tRNA + (6R)-5,10-methylene-5,6,7,8-tetrahydrofolate + NADPH + H(+) = 5-methyluridine(54) in tRNA + (6S)-5,6,7,8-tetrahydrofolate + NADP(+). Its function is as follows. Catalyzes the folate-dependent formation of 5-methyl-uridine at position 54 (M-5-U54) in all tRNAs. In Thermosipho melanesiensis (strain DSM 12029 / CIP 104789 / BI429), this protein is Methylenetetrahydrofolate--tRNA-(uracil-5-)-methyltransferase TrmFO.